Consider the following 210-residue polypeptide: LexA repressor (210 aa).

A DNA-binding region (H-T-H motif) is located at residues 28–48 (FEEIAEGMGLSSLATVHKHIG). Residues Ser131 and Lys169 each act as for autocatalytic cleavage activity in the active site.

This sequence belongs to the peptidase S24 family. Homodimer.

The enzyme catalyses Hydrolysis of Ala-|-Gly bond in repressor LexA.. In terms of biological role, represses a number of genes involved in the response to DNA damage (SOS response), including recA and lexA. In the presence of single-stranded DNA, RecA interacts with LexA causing an autocatalytic cleavage which disrupts the DNA-binding part of LexA, leading to derepression of the SOS regulon and eventually DNA repair. This chain is LexA repressor, found in Koribacter versatilis (strain Ellin345).